Reading from the N-terminus, the 168-residue chain is Transcriptional repressor NrdR (168 aa).

Residues 3 to 34 fold into a zinc finger; it reads CPFCQDAENKVIDSRESHEGSVIRRRRECLTC. Positions 49–139 constitute an ATP-cone domain; it reads PLIVKKDGRR…VYRSFRDIAE (91 aa).

This sequence belongs to the NrdR family. Zn(2+) is required as a cofactor.

Its function is as follows. Negatively regulates transcription of bacterial ribonucleotide reductase nrd genes and operons by binding to NrdR-boxes. The protein is Transcriptional repressor NrdR of Myxococcus xanthus (strain DK1622).